We begin with the raw amino-acid sequence, 117 residues long: Venom protein TxLP11 (117 aa).

The signal sequence occupies residues 1–22; that stretch reads MNTKTLIVVFLVCLLVSEVVLA.

In terms of processing, contains 4 disulfide bonds. In terms of tissue distribution, expressed by the venom gland.

The protein resides in the secreted. This chain is Venom protein TxLP11, found in Lychas mucronatus (Chinese swimming scorpion).